The primary structure comprises 50 residues: Acidic phospholipase A2 1 (50 aa).

Ca(2+) contacts are provided by Y27, G29, and G31. An intrachain disulfide couples C28 to C44. H47 is an active-site residue. D48 serves as a coordination point for Ca(2+).

Belongs to the phospholipase A2 family. Group II subfamily. D49 sub-subfamily. In terms of assembly, monomer. It depends on Ca(2+) as a cofactor. As to expression, expressed by the venom gland.

The protein resides in the secreted. It carries out the reaction a 1,2-diacyl-sn-glycero-3-phosphocholine + H2O = a 1-acyl-sn-glycero-3-phosphocholine + a fatty acid + H(+). Snake venom phospholipase A2 (PLA2) that displays a potent enzymatic activity as measured by indirect hemolysis of red blood cells. Is neither lethal when injected into mice nor does it present anticoagulant activity. Displays a moderate inhibitory activity on the aggregation of platelets induced by low levels of ADP, thrombin and arachidonate. In contrast, strongly inhibits platelet aggregation induced by high doses of collagen. Shows myotoxic activity, increases the plasma creatine-kinase activity and induces edema and myonecrosis of mouse skeletal muscles. PLA2 catalyzes the calcium-dependent hydrolysis of the 2-acyl groups in 3-sn-phosphoglycerides. This chain is Acidic phospholipase A2 1, found in Lachesis muta muta (Bushmaster).